Reading from the N-terminus, the 173-residue chain is Globin-like host-protective antigen (173 aa).

Residues 1–15 (MRFLLLAAFVAYAYA) form the signal peptide. The Globin domain occupies 25 to 166 (ALSALDVVPL…FNDEAQKQLA (142 aa)). Histidine 114 contacts heme b.

This sequence belongs to the globin family.

It is found in the secreted. Its subcellular location is the extracellular space. In terms of biological role, may be a globin and may play a role in oxygen transport. This chain is Globin-like host-protective antigen, found in Trichostrongylus colubriformis (Black scour worm).